The chain runs to 118 residues: Large ribosomal subunit protein bL20 (118 aa).

This sequence belongs to the bacterial ribosomal protein bL20 family.

Functionally, binds directly to 23S ribosomal RNA and is necessary for the in vitro assembly process of the 50S ribosomal subunit. It is not involved in the protein synthesizing functions of that subunit. The sequence is that of Large ribosomal subunit protein bL20 from Pseudomonas syringae pv. syringae (strain B728a).